Reading from the N-terminus, the 325-residue chain is MNALTAVHNNAVDSGQDYSGFTLIPSAQSPRLLELTFTEQTTKQFLEQVAEWPVQALEYKSFLRFRVGKILDDLCANQLQPLLLKTLLNRAEGALLINAVGIDDVAQADEMVKLATAVAHLIGRSNFDAMSGQYYARFVVKNVDNSDSYLRQPHRVMELHNDGTYVEEITDYVLMMKIDEQNMQGGNSLLLHLDDWEHLDHYFRHPLARRPMRFAAPPSKNVSKDVFHPVFDVDQQGRPVMRYIDQFVQPKDFEEGVWLSELSDAIETSKGILSVPVPVGKFLLINNLFWLHGRDRFTPHPDLRRELMRQRGYFAYATHHYQTHQ.

The Fe cation site is built by histidine 160, aspartate 162, and histidine 292.

It belongs to the glutarate hydroxylase family. As to quaternary structure, homotetramer. Requires Fe(2+) as cofactor.

It carries out the reaction glutarate + 2-oxoglutarate + O2 = (S)-2-hydroxyglutarate + succinate + CO2. It functions in the pathway amino-acid degradation. In terms of biological role, acts as an alpha-ketoglutarate-dependent dioxygenase catalyzing hydroxylation of glutarate (GA) to L-2-hydroxyglutarate (L2HG). Functions in a L-lysine degradation pathway that proceeds via cadaverine, glutarate and L-2-hydroxyglutarate. In Escherichia coli (strain 55989 / EAEC), this protein is Glutarate 2-hydroxylase.